Reading from the N-terminus, the 427-residue chain is Bifunctional enzyme MtnB/MtnX (427 aa).

The interval 1–221 is HK-MTPenyl-1-P phosphatase; the sequence is MRKPLIICDF…LEETAEVKEW (221 aa). Residues 222–427 form an MTRu-1-P dehydratase region; sequence MSEQKRQELA…KLKALQAYHV (206 aa). Zn(2+) contacts are provided by H317 and H319.

In the N-terminal section; belongs to the HAD-like hydrolase superfamily. MtnX family. The protein in the C-terminal section; belongs to the aldolase class II family. MtnB subfamily. In terms of assembly, homotetramer. Zn(2+) serves as cofactor.

The catalysed reaction is 5-(methylsulfanyl)-D-ribulose 1-phosphate = 5-methylsulfanyl-2,3-dioxopentyl phosphate + H2O. It catalyses the reaction 2-hydroxy-5-methylsulfanyl-3-oxopent-1-enyl phosphate + H2O = 1,2-dihydroxy-5-(methylsulfanyl)pent-1-en-3-one + phosphate. The protein operates within amino-acid biosynthesis; L-methionine biosynthesis via salvage pathway; L-methionine from S-methyl-5-thio-alpha-D-ribose 1-phosphate: step 2/6. It functions in the pathway amino-acid biosynthesis; L-methionine biosynthesis via salvage pathway; L-methionine from S-methyl-5-thio-alpha-D-ribose 1-phosphate: step 4/6. Its function is as follows. Catalyzes the dehydration of methylthioribulose-1-phosphate (MTRu-1-P) into 2,3-diketo-5-methylthiopentyl-1-phosphate (DK-MTP-1-P). In terms of biological role, dephosphorylates 2-hydroxy-3-keto-5-methylthiopentenyl-1-phosphate (HK-MTPenyl-1-P) yielding 1,2-dihydroxy-3-keto-5-methylthiopentene (DHK-MTPene). The sequence is that of Bifunctional enzyme MtnB/MtnX (mtnB/mtnX) from Bacillus licheniformis (strain ATCC 14580 / DSM 13 / JCM 2505 / CCUG 7422 / NBRC 12200 / NCIMB 9375 / NCTC 10341 / NRRL NRS-1264 / Gibson 46).